A 310-amino-acid polypeptide reads, in one-letter code: Serine protease 30 (310 aa).

The signal sequence occupies residues 1-21 (MESRARCIFLLLLQILTRARG). Positions 22–36 (DILPSVCGHSRDAGK) are cleaved as a propeptide — activation peptide. The Peptidase S1 domain occupies 37–277 (IVGGQDALEG…YVDWIQRILA (241 aa)). A disulfide bridge connects residues Cys-63 and Cys-79. Active-site charge relay system residues include His-78 and Asp-128. Intrachain disulfides connect Cys-161–Cys-235, Cys-191–Cys-214, and Cys-225–Cys-253. The active-site Charge relay system is Ser-229. N-linked (GlcNAc...) asparagine glycosylation is found at Asn-238 and Asn-279. Ser-281 carries the GPI-anchor amidated serine lipid modification. A propeptide spans 282–310 (DAYGYHSSASAAYQMLLPVLLAVALPGSL) (removed in mature form).

It belongs to the peptidase S1 family. Expressed primarily in distal gut.

The protein localises to the cell membrane. Its activity is regulated as follows. Inhibited by aprotinin, leupeptin, benzamidine and soybean trypsin inhibitor. Partially inhibited by PMSF and DFP. In terms of biological role, selectively cleaves synthetic peptide substrates of trypsin. Activates the epithelial sodium channel ENaC. This is Serine protease 30 (Prss30) from Mus musculus (Mouse).